The following is a 521-amino-acid chain: Bifunctional purine biosynthesis protein PurH (521 aa).

An MGS-like domain is found at 1 to 145 (MIKQALISVS…KNHRDVTVVV (145 aa)).

It belongs to the PurH family.

It carries out the reaction (6R)-10-formyltetrahydrofolate + 5-amino-1-(5-phospho-beta-D-ribosyl)imidazole-4-carboxamide = 5-formamido-1-(5-phospho-D-ribosyl)imidazole-4-carboxamide + (6S)-5,6,7,8-tetrahydrofolate. The enzyme catalyses IMP + H2O = 5-formamido-1-(5-phospho-D-ribosyl)imidazole-4-carboxamide. It functions in the pathway purine metabolism; IMP biosynthesis via de novo pathway; 5-formamido-1-(5-phospho-D-ribosyl)imidazole-4-carboxamide from 5-amino-1-(5-phospho-D-ribosyl)imidazole-4-carboxamide (10-formyl THF route): step 1/1. Its pathway is purine metabolism; IMP biosynthesis via de novo pathway; IMP from 5-formamido-1-(5-phospho-D-ribosyl)imidazole-4-carboxamide: step 1/1. The sequence is that of Bifunctional purine biosynthesis protein PurH from Burkholderia cenocepacia (strain HI2424).